Reading from the N-terminus, the 240-residue chain is Mitochondrial transcription rescue factor 1 (240 aa).

The N-terminal 83 residues, 1–83 (MAVPGVRLLT…ECYFPFSIRL (83 aa)), are a transit peptide targeting the mitochondrion. The interval 92-127 (STKKTLQKEADEEDSDEETSYPERSEQEEELESEPG) is disordered. The segment covering 101–124 (ADEEDSDEETSYPERSEQEEELES) has biased composition (acidic residues). Phosphoserine is present on residues serine 106 and serine 116. Positions 142 to 217 (FRYDVILKTG…LKKVYEEKTE (76 aa)) constitute an S4 RNA-binding domain.

In terms of assembly, monomer. Interacts with POLRMT. Interacts (via S4 domain) with MTRFR (via C-terminus). Associates with mitoribosomal S39 large subunit, peptidyl tRNA and nascent chain.

The protein localises to the mitochondrion matrix. Mitochondrial RNA-binding protein involved in mitochondrial transcription regulation. Functions as a protective factor to maintain proper mitochondrial RNA level during stress. Acts at the transcription level and its protective function depends on its RNA binding ability. Part of a mitoribosome-associated quality control pathway that prevents aberrant translation by responding to interruptions during elongation. As heterodimer with MTRF, ejects the unfinished nascent chain and peptidyl transfer RNA (tRNA), respectively, from stalled ribosomes. Recruitment of mitoribosome biogenesis factors to these quality control intermediates suggests additional roles for MTRES1 and MTRF during mitoribosome rescue. This is Mitochondrial transcription rescue factor 1 (Mtres1) from Mus musculus (Mouse).